We begin with the raw amino-acid sequence, 522 residues long: MALLPRALSSGGRPSWRRAARASRGFPLPLPFPAAATHALSRAMACRQEPQPQGPPPSAGAVVSYDYLVIGGGSGGLASARRAAELGARAAVVESHKLGGTCVNVGCVPKKVMWNTAVHSEFLHDHGDYGFSSCEGKFNWRVIKEKRDTYVSRLNTIYQNNLTKAHIEIIHGHAVFTSDTKPTIEVSGRKYTAPHILIATGGMPSSPHESQIPGASLGITSDGFFELEELPSRSVIVGAGYIAVEIAGILSALGSKTSLMIRHDKVLRSFDSMISTNCTEELENAGVEVLKFSQVKEVKKTSSGLEVSLVTAVPGRLPVMTTISDVDCLLWAIGRDPNSKGLSLNKLGIKTDDKGHIIVDEFQNTNVKGIYAVGDVCGKALLTPVAIAAGRKLAHRLFENKEDSKLDYNNIPTVVFSHPPIGTVGLTEDEAIHKYGKENVKIYSTSFTPMYHAVTKRKTKCVMKMVCAYEEEKVVGIHMQGLGCDEMLQGFAVAVKMGATKADFDNTVAIHPTSSEELVPLR.

A mitochondrion-targeting transit peptide spans 1–43 (MALLPRALSSGGRPSWRRAARASRGFPLPLPFPAAATHALSRA). Ser-74 and Gly-75 together coordinate FAD. Ser-74 is a binding site for glutathione. Arg-81 provides a ligand contact to glutathione. Glu-94 contributes to the FAD binding site. An N6-acetyllysine modification is found at Lys-97. Residues Thr-101, Cys-102, and Lys-110 each coordinate FAD. A disulfide bridge connects residues Cys-102 and Cys-107. Tyr-158 provides a ligand contact to glutathione. Ala-174 serves as a coordination point for FAD. 6 residues coordinate NADP(+): Ala-239, Ile-242, Glu-245, Arg-262, Arg-268, and Gly-334. Asp-375 serves as a coordination point for FAD. Leu-381 is a binding site for NADP(+). Thr-383 is a binding site for FAD. Arg-391 contacts glutathione. Val-414 serves as a coordination point for NADP(+). His-511 provides a ligand contact to FAD. Residue His-511 is the Proton acceptor of the active site.

It belongs to the class-I pyridine nucleotide-disulfide oxidoreductase family. In terms of assembly, homodimer; disulfide-linked. The cofactor is FAD.

The protein resides in the mitochondrion. It is found in the cytoplasm. It catalyses the reaction 2 glutathione + NADP(+) = glutathione disulfide + NADPH + H(+). Catalyzes the reduction of glutathione disulfide (GSSG) to reduced glutathione (GSH). Constitutes the major mechanism to maintain a high GSH:GSSG ratio in the cytosol. In Callithrix jacchus (White-tufted-ear marmoset), this protein is Glutathione reductase, mitochondrial (GSR).